The sequence spans 149 residues: UPF0178 protein VC0395_A0405/VC395_0897 (149 aa).

This sequence belongs to the UPF0178 family.

In Vibrio cholerae serotype O1 (strain ATCC 39541 / Classical Ogawa 395 / O395), this protein is UPF0178 protein VC0395_A0405/VC395_0897.